Here is a 431-residue protein sequence, read N- to C-terminus: Peptidase B (431 aa).

Mn(2+)-binding residues include Lys-196 and Asp-201. Residue Lys-208 is part of the active site. Mn(2+) contacts are provided by Asp-219, Asp-278, and Glu-280. Residue Arg-282 is part of the active site.

This sequence belongs to the peptidase M17 family. As to quaternary structure, homohexamer. The cofactor is Mn(2+).

It is found in the cytoplasm. The enzyme catalyses Release of an N-terminal amino acid, Xaa, from a peptide or arylamide. Xaa is preferably Glu or Asp but may be other amino acids, including Leu, Met, His, Cys and Gln.. Probably plays an important role in intracellular peptide degradation. The polypeptide is Peptidase B (Serratia proteamaculans (strain 568)).